The sequence spans 89 residues: Large ribosomal subunit protein bL27 (89 aa).

The disordered stretch occupies residues 1 to 21 (MAHKKGASSSRNGRDSNAQRL). The segment covering 7–19 (ASSSRNGRDSNAQ) has biased composition (polar residues).

Belongs to the bacterial ribosomal protein bL27 family.

This chain is Large ribosomal subunit protein bL27, found in Frankia alni (strain DSM 45986 / CECT 9034 / ACN14a).